The primary structure comprises 130 residues: Riboflavin kinase (130 aa).

Residue 12-17 (GLGVGA) coordinates CDP. Mg(2+) is bound by residues threonine 39 and asparagine 41. FMN contacts are provided by threonine 90 and glutamate 98. CDP is bound at residue 103 to 106 (KNLR).

The protein belongs to the archaeal riboflavin kinase family. The cofactor is Mg(2+).

The enzyme catalyses riboflavin + CTP = CDP + FMN + H(+). The protein operates within cofactor biosynthesis; FMN biosynthesis; FMN from riboflavin (CTP route): step 1/1. Functionally, catalyzes the CTP-dependent phosphorylation of riboflavin (vitamin B2) to form flavin mononucleotide (FMN). The protein is Riboflavin kinase of Staphylothermus marinus (strain ATCC 43588 / DSM 3639 / JCM 9404 / F1).